We begin with the raw amino-acid sequence, 336 residues long: Ephrin-B2 (336 aa).

Positions 1-28 (MAMARSRRDSVWKYCWGLLMVLCRTAIS) are cleaved as a signal peptide. Over 29–232 (RSIVLEPIYW…LLGSEVALFA (204 aa)) the chain is Extracellular. An Ephrin RBD domain is found at 31-167 (IVLEPIYWNS…TRAMKILMKV (137 aa)). The N-linked (GlcNAc...) asparagine glycan is linked to asparagine 39. 2 cysteine pairs are disulfide-bonded: cysteine 65/cysteine 104 and cysteine 92/cysteine 156. Asparagine 142 carries an N-linked (GlcNAc...) asparagine glycan. The segment at 170–216 (DASSAGSARNHGPTRRPELEAGTNGRSSTTSPFVKPNPGSSTDGNSA) is disordered. The segment covering 193-216 (NGRSSTTSPFVKPNPGSSTDGNSA) has biased composition (polar residues). Residues 233 to 253 (GIASGCIIFIVIIITLVVLLL) form a helical membrane-spanning segment. Topologically, residues 254–336 (KYRRRHRKHS…QSPANIYYKV (83 aa)) are cytoplasmic. At serine 263 the chain carries Phosphoserine. Threonine 277 is subject to Phosphothreonine. The residue at position 280 (arginine 280) is an Omega-N-methylarginine. Residues 334–336 (YKV) carry the PDZ-binding motif.

It belongs to the ephrin family. As to quaternary structure, interacts with PDZRN3. Binds to the ephrin receptor EPHA3, EPHA4 and EPHB4. Post-translationally, inducible phosphorylation of tyrosine residues in the cytoplasmic domain. Expressed in inner and outer pillar cells of the organ of Corti (at protein level). Expressed on lateral floor plate cells, specifically on commissural axon segments that have passed through the floor plate. Expressed in cells of the retinal ganglion cell layer during retinal axon guidance to the optic disk. Expressed in myogenic progenitor cells.

The protein resides in the cell membrane. It is found in the cell junction. Its subcellular location is the adherens junction. Its function is as follows. Cell surface transmembrane ligand for Eph receptors, a family of receptor tyrosine kinases which are crucial for migration, repulsion and adhesion during neuronal, vascular and epithelial development. Binds promiscuously Eph receptors residing on adjacent cells, leading to contact-dependent bidirectional signaling into neighboring cells. The signaling pathway downstream of the receptor is referred to as forward signaling while the signaling pathway downstream of the ephrin ligand is referred to as reverse signaling. Binds to receptor tyrosine kinase including EPHA4, EPHA3 and EPHB4. Together with EPHB4 plays a central role in heart morphogenesis and angiogenesis through regulation of cell adhesion and cell migration. EPHB4-mediated forward signaling controls cellular repulsion and segregation from EFNB2-expressing cells. May play a role in constraining the orientation of longitudinally projecting axons. This Mus musculus (Mouse) protein is Ephrin-B2 (Efnb2).